A 262-amino-acid chain; its full sequence is MSEDEISIEGDLFEEPEGFLPERPSSHFSTYKRKIPNAEPQEITMKLVGHNPLYGHLLWNAGIYTADYLDKHSDTLVQGKKILELGAASALPSLVCSLNHAKEVIVTDYPDPDLLSHMEYSFNDLKEKTKYELSPWKVKGYIWGHDLGELLFDEPGRKLAEEEKFDLIILSDLVFNHSEHHKLLDTCRQSLKRNGGKCLVVFSPHRPYLLQDDLSFFETAKQYQFKTEKIEMVTWKPMFEEDEETADIRARVYAFFLIPEWE.

Residues Trp59, 86 to 88 (GAA), Asp108, Trp143, and Ser171 each bind S-adenosyl-L-methionine.

The protein belongs to the class I-like SAM-binding methyltransferase superfamily. EFM7 family.

The protein resides in the cytoplasm. In terms of biological role, S-adenosyl-L-methionine-dependent protein methyltransferase that trimethylates the N-terminal glycine 'Gly-2' of elongation factor 1-alpha, before also catalyzing the mono- and dimethylation of 'Lys-3'. The chain is Protein N-terminal and lysine N-methyltransferase EFM7 from Candida albicans (strain SC5314 / ATCC MYA-2876) (Yeast).